The chain runs to 212 residues: Thiamine-phosphate synthase (212 aa).

4-amino-2-methyl-5-(diphosphooxymethyl)pyrimidine-binding positions include 33 to 37 (QMRFK) and N65. The Mg(2+) site is built by D66 and D85. T104 contributes to the 4-amino-2-methyl-5-(diphosphooxymethyl)pyrimidine binding site. 130–132 (TNT) provides a ligand contact to 2-[(2R,5Z)-2-carboxy-4-methylthiazol-5(2H)-ylidene]ethyl phosphate. A 4-amino-2-methyl-5-(diphosphooxymethyl)pyrimidine-binding site is contributed by K133. G166 contributes to the 2-[(2R,5Z)-2-carboxy-4-methylthiazol-5(2H)-ylidene]ethyl phosphate binding site.

The protein belongs to the thiamine-phosphate synthase family. Requires Mg(2+) as cofactor.

It carries out the reaction 2-[(2R,5Z)-2-carboxy-4-methylthiazol-5(2H)-ylidene]ethyl phosphate + 4-amino-2-methyl-5-(diphosphooxymethyl)pyrimidine + 2 H(+) = thiamine phosphate + CO2 + diphosphate. The catalysed reaction is 2-(2-carboxy-4-methylthiazol-5-yl)ethyl phosphate + 4-amino-2-methyl-5-(diphosphooxymethyl)pyrimidine + 2 H(+) = thiamine phosphate + CO2 + diphosphate. It catalyses the reaction 4-methyl-5-(2-phosphooxyethyl)-thiazole + 4-amino-2-methyl-5-(diphosphooxymethyl)pyrimidine + H(+) = thiamine phosphate + diphosphate. It functions in the pathway cofactor biosynthesis; thiamine diphosphate biosynthesis; thiamine phosphate from 4-amino-2-methyl-5-diphosphomethylpyrimidine and 4-methyl-5-(2-phosphoethyl)-thiazole: step 1/1. Its function is as follows. Condenses 4-methyl-5-(beta-hydroxyethyl)thiazole monophosphate (THZ-P) and 2-methyl-4-amino-5-hydroxymethyl pyrimidine pyrophosphate (HMP-PP) to form thiamine monophosphate (TMP). The chain is Thiamine-phosphate synthase from Flavobacterium johnsoniae (strain ATCC 17061 / DSM 2064 / JCM 8514 / BCRC 14874 / CCUG 350202 / NBRC 14942 / NCIMB 11054 / UW101) (Cytophaga johnsonae).